The primary structure comprises 384 residues: Sphingosine 1-phosphate receptor 3 (384 aa).

Topologically, residues 1–34 are extracellular; it reads MMINPLIYLHYNYTGKLDHRPTVGTSPGTRDPKT. Residue asparagine 12 is glycosylated (N-linked (GlcNAc...) asparagine). A helical transmembrane segment spans residues 35–55; it reads IAFLVVCSFIILENLTVLLAI. The Cytoplasmic segment spans residues 56-64; sequence WKNHRFHNR. Residues 65-85 traverse the membrane as a helical segment; that stretch reads MYFFIGNLALCDLLASVAYLV. The Extracellular segment spans residues 86–105; sequence NLLLSGEKTLQLSPVLWFVR. A helical membrane pass occupies residues 106–126; sequence EGSMFVTLGASIFSLLAIAIE. Residues 127–144 lie on the Cytoplasmic side of the membrane; that stretch reads RHLTMIKMRPYDASKNYR. A helical transmembrane segment spans residues 145–165; sequence VFLLIGTCWLVAVLLGALPIL. Residues 166–186 are Extracellular-facing; the sequence is GWNCLGNLPDCSTILPLYTKK. Residues 187–207 form a helical membrane-spanning segment; it reads YVAFCIIVFIVLLLAMSVLYA. The Cytoplasmic portion of the chain corresponds to 208–235; it reads RIYILVKSSSQKVSKHRNSEHAMSLLRT. The chain crosses the membrane as a helical span at residues 236 to 256; the sequence is VIIVVGVFIACWMPIFVLLLL. Topologically, residues 257 to 271 are extracellular; that stretch reads DVACERPCPILYKAD. Residues 272-292 traverse the membrane as a helical segment; it reads WFIAVAVLNSAMNPIIYTLAS. The Cytoplasmic segment spans residues 293–384; the sequence is REMRRAFLGL…REGEGGNGGR (92 aa). 2 stretches are compositionally biased toward polar residues: residues 315 to 325 and 336 to 347; these read NDSGNKQFQEP and QTHPNQSQQSSR. The tract at residues 315–384 is disordered; that stretch reads NDSGNKQFQE…REGEGGNGGR (70 aa). Over residues 349-359 the composition is skewed to basic and acidic residues; the sequence is AELDREQETGH.

It belongs to the G-protein coupled receptor 1 family.

It is found in the cell membrane. Its function is as follows. Receptor for the lysosphingolipid sphingosine 1-phosphate (S1P). In Takifugu rubripes (Japanese pufferfish), this protein is Sphingosine 1-phosphate receptor 3 (s1pr3).